The primary structure comprises 184 residues: Copper transporter 6 (184 aa).

The span at 1–25 (MRGMGDDGMGPMAMAPPRSGHATAA) shows a compositional bias: low complexity. Residues 1-27 (MRGMGDDGMGPMAMAPPRSGHATAAAP) are disordered. 2 helical membrane passes run 64–84 (YALCLLFVLALAALTEGLSVL) and 124–144 (MAYLVMLAVMSFNVGVLLAAV).

This sequence belongs to the copper transporter (Ctr) (TC 1.A.56) family. SLC31A subfamily.

It localises to the membrane. Involved in the transport of copper. The chain is Copper transporter 6 (COPT6) from Oryza sativa subsp. japonica (Rice).